A 261-amino-acid chain; its full sequence is Segregation and condensation protein A (261 aa).

This sequence belongs to the ScpA family. As to quaternary structure, component of a cohesin-like complex composed of ScpA, ScpB and the Smc homodimer, in which ScpA and ScpB bind to the head domain of Smc. The presence of the three proteins is required for the association of the complex with DNA.

Its subcellular location is the cytoplasm. Participates in chromosomal partition during cell division. May act via the formation of a condensin-like complex containing Smc and ScpB that pull DNA away from mid-cell into both cell halves. This chain is Segregation and condensation protein A, found in Ligilactobacillus salivarius (strain UCC118) (Lactobacillus salivarius).